The following is a 301-amino-acid chain: Putative S-adenosyl-L-methionine-dependent methyltransferase MT0851 (301 aa).

S-adenosyl-L-methionine contacts are provided by residues D127 and 156-157 (DL).

Belongs to the UPF0677 family.

In terms of biological role, exhibits S-adenosyl-L-methionine-dependent methyltransferase activity. This Mycobacterium tuberculosis (strain CDC 1551 / Oshkosh) protein is Putative S-adenosyl-L-methionine-dependent methyltransferase MT0851.